The following is a 362-amino-acid chain: GTPase Obg (362 aa).

The Obg domain maps to 1-159; the sequence is MKFLDEAKVY…KTIWLRLKLI (159 aa). The 168-residue stretch at 160 to 327 folds into the OBG-type G domain; that stretch reads ADAGLVGLPN…VLRALRDVIV (168 aa). Residues 166–173, 191–195, 212–215, 279–282, and 308–310 each bind GTP; these read GLPNAGKS, FTTLH, DIPG, SQID, and SAV. Residues Ser173 and Thr193 each coordinate Mg(2+). Residues 332–362 are disordered; that stretch reads EEKPAKVPKLRHRDMIVSDEGEGEDGADDQP. Residues 348–362 are compositionally biased toward acidic residues; it reads VSDEGEGEDGADDQP.

It belongs to the TRAFAC class OBG-HflX-like GTPase superfamily. OBG GTPase family. In terms of assembly, monomer. Mg(2+) is required as a cofactor.

The protein localises to the cytoplasm. In terms of biological role, an essential GTPase which binds GTP, GDP and possibly (p)ppGpp with moderate affinity, with high nucleotide exchange rates and a fairly low GTP hydrolysis rate. Plays a role in control of the cell cycle, stress response, ribosome biogenesis and in those bacteria that undergo differentiation, in morphogenesis control. The protein is GTPase Obg of Rhizobium etli (strain CIAT 652).